Here is a 214-residue protein sequence, read N- to C-terminus: MGRRPARCYRYCKNKPYPKSRFCRGVPDAKIRIFDLGRKKAKVDEFPLCGHMVSDEYEQLSSEALEAARICANKYMVKSCGKDGFHIRVRLHPFHVIRINKMLSCAGADRLQTGMRGAFGKPQGTVARVHIGQVIMSIRTKLQNKEHVIEALRRAKFKFPGRQKIHISKKWGFTKFNADEFENMVAEKRLIPDGCGVKYIPNRGPLDKWRALHS.

Position 32 is a citrulline (Arg32). A Glycyl lysine isopeptide (Lys-Gly) (interchain with G-Cter in SUMO2) cross-link involves residue Lys175. Lys188 participates in a covalent cross-link: Glycyl lysine isopeptide (Lys-Gly) (interchain with G-Cter in ubiquitin).

It belongs to the universal ribosomal protein uL16 family. Component of the large ribosomal subunit. Mature ribosomes consist of a small (40S) and a large (60S) subunit. The 40S subunit contains about 33 different proteins and 1 molecule of RNA (18S). The 60S subunit contains about 49 different proteins and 3 molecules of RNA (28S, 5.8S and 5S). In terms of processing, citrullinated by PADI4. Post-translationally, ufmylated by UFL1.

It localises to the cytoplasm. Component of the large ribosomal subunit. Plays a role in the formation of actively translating ribosomes. May play a role in the embryonic brain development. The polypeptide is Large ribosomal subunit protein uL16 (Bos taurus (Bovine)).